The sequence spans 497 residues: MKFLLTTAFLILISLWVEEAYSKEKSSKKGKGKKKQYLCPSQQSAEDLARVPANSTSNILNRLLVSYDPRIRPNFKGIPVDVVVNIFINSFGSIQETTMDYRVNIFLRQKWNDPRLKLPSDFRGSDALTVDPTMYKCLWKPDLFFANEKSANFHDVTQENILLFIFRDGDVLVSMRLSITLSCPLDLTLFPMDTQRCKMQLESFGYTTDDLRFIWQSGDPVQLEKIALPQFDIKKEDIEYGNCTKYYKGTGYYTCVEVIFTLRRQVGFYMMGVYAPTLLIVVLSWLSFWINPDASAARVPLGIFSVLSLASECTTLAAELPKVSYVKALDVWLIACLLFGFASLVEYAVVQVMLNNPKRVEAEKARIAKAEQADGKGGNVAKKNTVNGTGTPVHISTLQVGETRCKKVCTSKSDLRSNDFSIVGSLPRDFELSNYDCYGKPIEVNNGLGKSQAKNNKKPPPAKPVIPTAAKRIDLYARALFPFCFLFFNVIYWSIYL.

The N-terminal stretch at 1-22 (MKFLLTTAFLILISLWVEEAYS) is a signal peptide. Topologically, residues 23–268 (KEKSSKKGKG…IFTLRRQVGF (246 aa)) are extracellular. N-linked (GlcNAc...) asparagine glycosylation is present at N54. Glycine contacts are provided by R108 and S174. A disulfide bridge links C183 with C197. N-linked (GlcNAc...) asparagine glycosylation is present at N242. An intrachain disulfide couples C243 to C255. T250 provides a ligand contact to glycine. Residues 269 to 289 (YMMGVYAPTLLIVVLSWLSFW) traverse the membrane as a helical segment. Residues 290-294 (INPDA) are Cytoplasmic-facing. The helical transmembrane segment at 295 to 315 (SAARVPLGIFSVLSLASECTT) threads the bilayer. Residues 316–327 (LAAELPKVSYVK) are Extracellular-facing. Residues 328–349 (ALDVWLIACLLFGFASLVEYAV) traverse the membrane as a helical segment. Residues 350 to 472 (VQVMLNNPKR…KPVIPTAAKR (123 aa)) are Cytoplasmic-facing. Residue T391 is modified to Phosphothreonine. The helical transmembrane segment at 473–496 (IDLYARALFPFCFLFFNVIYWSIY) threads the bilayer.

It belongs to the ligand-gated ion channel (TC 1.A.9) family. Glycine receptor (TC 1.A.9.3) subfamily. GLRB sub-subfamily. As to quaternary structure, forms heteropentamers with glycin receptor alpha subunits. Heteropentamers with GLRA1 can be composed of two GLRA1 and three GLRB subunits, or three GLRA1 and two GLRB subunits, or four GLRA1 subunits and one GLRB subunit. Forms heteropentamers with GLRA2. Functional GLRB-GLRA2 heteropentamers contain four GLRA2 subunits and one GLRB subunit, although alternative subunit composition cannot be excluded. Forms a heteropentamer with GLRA3. Interacts with GPHN.

It localises to the postsynaptic cell membrane. The protein localises to the synapse. Its subcellular location is the cell projection. The protein resides in the dendrite. It is found in the cell membrane. It localises to the cytoplasm. The enzyme catalyses chloride(in) = chloride(out). Its activity is regulated as follows. Channel opening is triggered by extracellular glycine. Heteropentameric channels composed of GLRB and GLRA1 are activated by lower glycine levels than homopentameric GLRA1. In terms of biological role, subunit of heteromeric glycine-gated chloride channels. Plays an important role in the down-regulation of neuronal excitability. Contributes to the generation of inhibitory postsynaptic currents. The sequence is that of Glycine receptor subunit beta (GLRB) from Homo sapiens (Human).